The chain runs to 1005 residues: DNA polymerase (1005 aa).

Belongs to the DNA polymerase type-B family. As to quaternary structure, interacts with OPG148. Component of the Uracil-DNA glycosylase(UDG)-OPG148-polymerase complex; OPG148 and OPG116/UDG form a heterodimeric processivity factor that associates with OPG071 to form the processive polymerase holoenzyme.

The catalysed reaction is DNA(n) + a 2'-deoxyribonucleoside 5'-triphosphate = DNA(n+1) + diphosphate. Catalyzes DNA synthesis. Acquires processivity by associating with a heterodimeric processivity factor comprised of the viral OPG148 and OPG116 proteins, thereby forming the DNA polymerase holoenzyme. Displays 3'- to 5' exonuclease activity. Might participate in viral DNA recombination. Does not perform OPG116/D4synthesis across an abasic site. The polypeptide is DNA polymerase (OPG071) (Variola virus).